Reading from the N-terminus, the 250-residue chain is Cell division protein ZapD (250 aa).

The protein belongs to the ZapD family. In terms of assembly, interacts with FtsZ.

The protein resides in the cytoplasm. Its function is as follows. Cell division factor that enhances FtsZ-ring assembly. Directly interacts with FtsZ and promotes bundling of FtsZ protofilaments, with a reduction in FtsZ GTPase activity. The sequence is that of Cell division protein ZapD from Bordetella petrii (strain ATCC BAA-461 / DSM 12804 / CCUG 43448).